Reading from the N-terminus, the 172-residue chain is Large ribosomal subunit protein uL10 (172 aa).

This sequence belongs to the universal ribosomal protein uL10 family. In terms of assembly, part of the ribosomal stalk of the 50S ribosomal subunit. The N-terminus interacts with L11 and the large rRNA to form the base of the stalk. The C-terminus forms an elongated spine to which L12 dimers bind in a sequential fashion forming a multimeric L10(L12)X complex.

Its function is as follows. Forms part of the ribosomal stalk, playing a central role in the interaction of the ribosome with GTP-bound translation factors. This chain is Large ribosomal subunit protein uL10, found in Bradyrhizobium sp. (strain ORS 278).